Reading from the N-terminus, the 535-residue chain is Dimethylaniline monooxygenase [N-oxide-forming] 2 (535 aa).

Position 2 is an N-acetylalanine (Ala-2). FAD is bound by residues 9-13 (GAGVS), Glu-32, 40-41 (LW), and 61-62 (NT). Residues 60–61 (TN) and 195–198 (SAAD) each bind NADP(+). Lys-492 is covalently cross-linked (Glycyl lysine isopeptide (Lys-Gly) (interchain with G-Cter in SUMO)). A helical membrane pass occupies residues 510–530 (APVSFLLKILGLLAVVLAFFF).

The protein belongs to the FMO family. The cofactor is FAD. It depends on Mg(2+) as a cofactor.

It localises to the microsome membrane. It is found in the endoplasmic reticulum membrane. In terms of biological role, catalyzes the oxidative metabolism of numerous xenobiotics, including mainly therapeutic drugs and insecticides that contain a soft nucleophile, most commonly nitrogen and sulfur and participates to their bioactivation. Catalyzes the S-oxygenation of the prodrug ethionamide (ETA) to the S-oxide (ETASO), the first step in its bioactivation following by the second oxygenation to the sulfinic acid but to a lesser extend. The polypeptide is Dimethylaniline monooxygenase [N-oxide-forming] 2 (Mus musculus (Mouse)).